The following is a 22-amino-acid chain: uncharacterized protein (22 aa).

Residues 1-22 (MHNSIAYDKDGNSTGQKYYAYG) are disordered.

This is an uncharacterized protein from Lactobacillus helveticus (Lactobacillus suntoryeus).